The primary structure comprises 137 residues: Ribosome-binding factor A (137 aa).

The protein belongs to the RbfA family. As to quaternary structure, monomer. Binds 30S ribosomal subunits, but not 50S ribosomal subunits or 70S ribosomes.

The protein localises to the cytoplasm. One of several proteins that assist in the late maturation steps of the functional core of the 30S ribosomal subunit. Associates with free 30S ribosomal subunits (but not with 30S subunits that are part of 70S ribosomes or polysomes). Required for efficient processing of 16S rRNA. May interact with the 5'-terminal helix region of 16S rRNA. This is Ribosome-binding factor A from Shewanella amazonensis (strain ATCC BAA-1098 / SB2B).